Here is a 96-residue protein sequence, read N- to C-terminus: Large ribosomal subunit protein eL21 (96 aa).

This sequence belongs to the eukaryotic ribosomal protein eL21 family.

The sequence is that of Large ribosomal subunit protein eL21 from Methanothrix thermoacetophila (strain DSM 6194 / JCM 14653 / NBRC 101360 / PT) (Methanosaeta thermophila).